The sequence spans 1892 residues: Protein TIC 214 (1892 aa).

The next 6 helical transmembrane spans lie at 12-32 (LISLYMTIINSVVMVGLYYGF), 68-88 (FIAGQLMMFISIYYVPLHLAL), 89-109 (GKPHTITVLALPYLLFHFFWN), 128-148 (LSIQCVFLNNLIIQLFNHFIL), 176-196 (VGWLIGHILLMKWVGLVLVWI), and 225-245 (IFSILLFITCVYYLGRIPSPI). Acidic residues predominate over residues 256-266 (PEEVGESEEER). A disordered region spans residues 256-299 (PEEVGESEEERNIEIETISEGGGANQKQGTEENTSSSLFSEEEV). Over residues 280 to 294 (NQKQGTEENTSSSLF) the composition is skewed to polar residues. Residues 1115–1135 (FYFFINFFIEKIYMDILLYII) traverse the membrane as a helical segment. A disordered region spans residues 1613–1636 (SNQEKDVEEDYDKSDKKKRRKKKQ).

Belongs to the TIC214 family. In terms of assembly, part of the Tic complex.

It localises to the plastid. Its subcellular location is the chloroplast inner membrane. In terms of biological role, involved in protein precursor import into chloroplasts. May be part of an intermediate translocation complex acting as a protein-conducting channel at the inner envelope. In Gossypium hirsutum (Upland cotton), this protein is Protein TIC 214.